A 235-amino-acid chain; its full sequence is MSTDHVSTHPDSPLHGNGIGSEAINLAAIRQEYTKGGLKEGDLPDNPLSLFNRWLHEAIDAQVDEPTAMLVGTVSPEGQPSTRTVLLKDLHDGKFIFYTNYESRKGTHLAKNPYISLSFVWHALERQVHIEGIASKVPAGESDTYFRQRPYKSRIGARISPQSRPLKSRMQLIRNFVAEAARWVGREVERPAHWGGYAVTPHRIEFWQGRANRLHDRFLYSLQPDGSWQKERLAP.

Substrate is bound by residues 30-33 (RQEY) and Lys88. Residues 83-88 (RTVLLK), 98-99 (YT), Arg104, Lys105, and Gln127 each bind FMN. Substrate contacts are provided by Tyr145, Arg149, and Ser153. Residues 162–163 (QS) and Trp207 each bind FMN. 213 to 215 (RLH) is a substrate binding site. Residue Arg217 coordinates FMN.

The protein belongs to the pyridoxamine 5'-phosphate oxidase family. As to quaternary structure, homodimer. The cofactor is FMN.

It catalyses the reaction pyridoxamine 5'-phosphate + O2 + H2O = pyridoxal 5'-phosphate + H2O2 + NH4(+). The enzyme catalyses pyridoxine 5'-phosphate + O2 = pyridoxal 5'-phosphate + H2O2. It participates in cofactor metabolism; pyridoxal 5'-phosphate salvage; pyridoxal 5'-phosphate from pyridoxamine 5'-phosphate: step 1/1. The protein operates within cofactor metabolism; pyridoxal 5'-phosphate salvage; pyridoxal 5'-phosphate from pyridoxine 5'-phosphate: step 1/1. Functionally, catalyzes the oxidation of either pyridoxine 5'-phosphate (PNP) or pyridoxamine 5'-phosphate (PMP) into pyridoxal 5'-phosphate (PLP). This chain is Pyridoxine/pyridoxamine 5'-phosphate oxidase, found in Bacteroides fragilis (strain YCH46).